A 65-amino-acid polypeptide reads, in one-letter code: Large ribosomal subunit protein bL33c (65 aa).

Belongs to the bacterial ribosomal protein bL33 family.

The protein resides in the plastid. The protein localises to the chloroplast. The protein is Large ribosomal subunit protein bL33c of Chara vulgaris (Common stonewort).